Consider the following 175-residue polypeptide: Inorganic pyrophosphatase 1 (175 aa).

Substrate is bound by residues lysine 30, arginine 44, and tyrosine 56. Aspartate 66, aspartate 71, and aspartate 103 together coordinate Mg(2+). Tyrosine 142 provides a ligand contact to substrate.

The protein belongs to the PPase family. Homohexamer. Requires Mg(2+) as cofactor.

Its subcellular location is the cytoplasm. It catalyses the reaction diphosphate + H2O = 2 phosphate + H(+). In terms of biological role, catalyzes the hydrolysis of inorganic pyrophosphate (PPi) forming two phosphate ions. This Pseudomonas syringae pv. tomato (strain ATCC BAA-871 / DC3000) protein is Inorganic pyrophosphatase 1.